The chain runs to 313 residues: Putative S-adenosyl-L-methionine-dependent methyltransferase MMAR_0955 (313 aa).

S-adenosyl-L-methionine is bound by residues aspartate 132 and 161–162 (DL).

It belongs to the UPF0677 family.

Its function is as follows. Exhibits S-adenosyl-L-methionine-dependent methyltransferase activity. The sequence is that of Putative S-adenosyl-L-methionine-dependent methyltransferase MMAR_0955 from Mycobacterium marinum (strain ATCC BAA-535 / M).